The following is a 161-amino-acid chain: 2-C-methyl-D-erythritol 2,4-cyclodiphosphate synthase (161 aa).

Residues D10 and H12 each contribute to the a divalent metal cation site. Residues 10–12 (DVH) and 36–37 (HS) each bind 4-CDP-2-C-methyl-D-erythritol 2-phosphate. H44 lines the a divalent metal cation pocket. 4-CDP-2-C-methyl-D-erythritol 2-phosphate-binding positions include 58 to 60 (DIG), 63 to 67 (FSDTD), and R144.

The protein belongs to the IspF family. In terms of assembly, homotrimer. It depends on a divalent metal cation as a cofactor.

The catalysed reaction is 4-CDP-2-C-methyl-D-erythritol 2-phosphate = 2-C-methyl-D-erythritol 2,4-cyclic diphosphate + CMP. It functions in the pathway isoprenoid biosynthesis; isopentenyl diphosphate biosynthesis via DXP pathway; isopentenyl diphosphate from 1-deoxy-D-xylulose 5-phosphate: step 4/6. Its function is as follows. Involved in the biosynthesis of isopentenyl diphosphate (IPP) and dimethylallyl diphosphate (DMAPP), two major building blocks of isoprenoid compounds. Catalyzes the conversion of 4-diphosphocytidyl-2-C-methyl-D-erythritol 2-phosphate (CDP-ME2P) to 2-C-methyl-D-erythritol 2,4-cyclodiphosphate (ME-CPP) with a corresponding release of cytidine 5-monophosphate (CMP). In Burkholderia cenocepacia (strain HI2424), this protein is 2-C-methyl-D-erythritol 2,4-cyclodiphosphate synthase.